We begin with the raw amino-acid sequence, 1009 residues long: Rho-type GTPase-activating protein 2 (1009 aa).

LIM zinc-binding domains lie at 11 to 68 (SLCV…DCSD) and 69 to 129 (KCTN…LLRK). Residues 143–155 (KEDFPIKLPERSV) show a composition bias toward basic and acidic residues. Disordered regions lie at residues 143-228 (KEDF…RTVS), 358-433 (TKEN…LSRS), 449-608 (TSEM…DATD), 664-709 (TREK…ASPK), and 723-780 (QVGD…DYTP). The span at 162–196 (TRINGKSDVSTNNTAISKNLVSSNEDQQLTPQVLV) shows a compositional bias: polar residues. Basic and acidic residues predominate over residues 212–222 (DNSKDREETSS). 2 stretches are compositionally biased toward polar residues: residues 363-385 (KSSQ…ITRT) and 399-414 (LRLS…QTAD). The span at 481 to 491 (NIRKSKAKKNP) shows a compositional bias: basic residues. Composition is skewed to polar residues over residues 493–510 (SRGQ…QHGN) and 522–553 (QSSL…SSSG). A compositionally biased stretch (basic and acidic residues) spans 664–682 (TREKDKQSASSRESLEQKE). Composition is skewed to polar residues over residues 683-707 (NIAT…SNAS) and 728-749 (ESQQ…QKEI). Ser-763 carries the phosphoserine modification. In terms of domain architecture, Rho-GAP spans 788-1006 (SSLQARCAYE…FILGNYRDIF (219 aa)).

In terms of biological role, GTPase-activating protein (GAP) for CDC42 and/or RHO1. The protein is Rho-type GTPase-activating protein 2 (RGA2) of Saccharomyces cerevisiae (strain ATCC 204508 / S288c) (Baker's yeast).